We begin with the raw amino-acid sequence, 168 residues long: Alpha-amylase/trypsin inhibitor CM3 (168 aa).

A signal peptide spans 1–25 (MACKSSCSLLLLAAVLLSVLAAASA).

Belongs to the protease inhibitor I6 (cereal trypsin/alpha-amylase inhibitor) family. In terms of assembly, subunit of the tetrameric inhibitor. In terms of processing, five disulfide bonds, which are essential for the inhibitor activity, are probably present. As to expression, developing endosperm.

It is found in the secreted. Functionally, alpha-amylase/trypsin inhibitor. It could be involved in insect defense mechanisms. The chain is Alpha-amylase/trypsin inhibitor CM3 from Triticum aestivum (Wheat).